The primary structure comprises 428 residues: D-amino acid dehydrogenase (428 aa).

FAD is bound at residue 3–17 (VVVLGSGVVGVTSAY).

It belongs to the DadA oxidoreductase family. It depends on FAD as a cofactor.

The catalysed reaction is a D-alpha-amino acid + A + H2O = a 2-oxocarboxylate + AH2 + NH4(+). Its pathway is amino-acid degradation; D-alanine degradation; NH(3) and pyruvate from D-alanine: step 1/1. In terms of biological role, oxidative deamination of D-amino acids. The sequence is that of D-amino acid dehydrogenase from Paraburkholderia phytofirmans (strain DSM 17436 / LMG 22146 / PsJN) (Burkholderia phytofirmans).